Reading from the N-terminus, the 258-residue chain is Imidazole glycerol phosphate synthase subunit HisF (258 aa).

Residues Asp-12 and Asp-131 contribute to the active site.

Belongs to the HisA/HisF family. In terms of assembly, heterodimer of HisH and HisF.

It is found in the cytoplasm. It catalyses the reaction 5-[(5-phospho-1-deoxy-D-ribulos-1-ylimino)methylamino]-1-(5-phospho-beta-D-ribosyl)imidazole-4-carboxamide + L-glutamine = D-erythro-1-(imidazol-4-yl)glycerol 3-phosphate + 5-amino-1-(5-phospho-beta-D-ribosyl)imidazole-4-carboxamide + L-glutamate + H(+). It participates in amino-acid biosynthesis; L-histidine biosynthesis; L-histidine from 5-phospho-alpha-D-ribose 1-diphosphate: step 5/9. Its function is as follows. IGPS catalyzes the conversion of PRFAR and glutamine to IGP, AICAR and glutamate. The HisF subunit catalyzes the cyclization activity that produces IGP and AICAR from PRFAR using the ammonia provided by the HisH subunit. This Pseudarthrobacter chlorophenolicus (strain ATCC 700700 / DSM 12829 / CIP 107037 / JCM 12360 / KCTC 9906 / NCIMB 13794 / A6) (Arthrobacter chlorophenolicus) protein is Imidazole glycerol phosphate synthase subunit HisF.